A 154-amino-acid polypeptide reads, in one-letter code: Endoribonuclease YbeY (154 aa).

Residues His113, His117, and His123 each coordinate Zn(2+).

The protein belongs to the endoribonuclease YbeY family. Requires Zn(2+) as cofactor.

The protein localises to the cytoplasm. Functionally, single strand-specific metallo-endoribonuclease involved in late-stage 70S ribosome quality control and in maturation of the 3' terminus of the 16S rRNA. The protein is Endoribonuclease YbeY of Ehrlichia chaffeensis (strain ATCC CRL-10679 / Arkansas).